Reading from the N-terminus, the 206-residue chain is Large ribosomal subunit protein uL4 (206 aa).

This sequence belongs to the universal ribosomal protein uL4 family. In terms of assembly, part of the 50S ribosomal subunit.

Its function is as follows. One of the primary rRNA binding proteins, this protein initially binds near the 5'-end of the 23S rRNA. It is important during the early stages of 50S assembly. It makes multiple contacts with different domains of the 23S rRNA in the assembled 50S subunit and ribosome. In terms of biological role, forms part of the polypeptide exit tunnel. The chain is Large ribosomal subunit protein uL4 from Desulfatibacillum aliphaticivorans.